Consider the following 637-residue polypeptide: Chaperone protein HtpG (637 aa).

An a; substrate-binding region spans residues 1 to 335; the sequence is MQGTVNSERL…SSDLPLNISR (335 aa). The b stretch occupies residues 336 to 559; it reads ETLQNNKIIE…DGSMDIRMER (224 aa). A c region spans residues 560–637; sequence FLREQKQLNY…RMNSVLSQIN (78 aa).

This sequence belongs to the heat shock protein 90 family. Homodimer.

Its subcellular location is the cytoplasm. Its function is as follows. Molecular chaperone. Has ATPase activity. The protein is Chaperone protein HtpG of Ehrlichia ruminantium (strain Gardel).